A 344-amino-acid chain; its full sequence is MAALIEKFWFGHHPKGLMLLLNVLFWPVFWPLSKLFGFISVRRRNKYQTGEKVAYRAPVPVVVVGNITAGGNGKTPVVVWLVEQLQAKGLKPGVVSRGYGGKAPHYPYLVEDKTSTDLVGDEPVLIRRRTGAPVAVSPIRSDAVMMLLEHDVDVIITDDGLQHYALARDIEFVVIDGQRRFGNQQLLPLGPLRETCDRLADVDFLICNGGKAQKNEAPMHLQPSALINVKTGERCSINELENIVAMAGIGHPPRFFKTLEELGVTPVHCQPFTDHQAFSETELKHLAQQGQHLVMTEKDAVKCHAFAQSNWWYVPVDAVIPTSNATAIINRIIKVKEEYGSPSA.

Residue 68 to 75 (TAGGNGKT) participates in ATP binding.

The protein belongs to the LpxK family.

The catalysed reaction is a lipid A disaccharide + ATP = a lipid IVA + ADP + H(+). The protein operates within glycolipid biosynthesis; lipid IV(A) biosynthesis; lipid IV(A) from (3R)-3-hydroxytetradecanoyl-[acyl-carrier-protein] and UDP-N-acetyl-alpha-D-glucosamine: step 6/6. Its function is as follows. Transfers the gamma-phosphate of ATP to the 4'-position of a tetraacyldisaccharide 1-phosphate intermediate (termed DS-1-P) to form tetraacyldisaccharide 1,4'-bis-phosphate (lipid IVA). The chain is Tetraacyldisaccharide 4'-kinase from Photobacterium profundum (strain SS9).